The chain runs to 369 residues: MNTFGQQPTNPHAQDLLDMAMYCDHFSLYHQQQNQQLPQRPAAPPATGYGLNEYSSPPSSPYLWLNGPAINSSPYLNGGSGSPYFPAGYGGGQRQFLPPSSGFGVADFPWLSIPNQADLLKMVRPPYSYSSLIAMAIQNTPDKKLTLSQIYNYVAENFPFYKKSKAGWQNSIRHNLSLNDCFKKVARDDHDPGKGNYWTLDPNCEKMFDNGNFRRKRKRKSESVGAGFDEDSNEDKKPLALKSLGSDSPQGASVLEQSSYDAAPEGKSKAPVGSAAQDSSHCFTNFASNMNALINNRTPRQFTAGRGDFSNSRHYLAELTSCPIPSPQISAPQTGSKVPCYPSKQQNNLCTSVMNPFGLNHLYSREGEV.

A DNA-binding region (fork-head) is located at residues 124–218; that stretch reads RPPYSYSSLI…DNGNFRRKRK (95 aa). Residues 215–252 form a disordered region; it reads RKRKRKSESVGAGFDEDSNEDKKPLALKSLGSDSPQGA.

In terms of tissue distribution, localized to the animal hemisphere of early cleavage stage embryos. Zygotic expression is restricted to the dorsal part of the epibranchial placodes of the head within a region located near the tip of the first, second and third visceral pouch.

Its subcellular location is the nucleus. Functionally, possible transcriptional activator. The protein is Forkhead box protein I2-A (foxi2-a) of Xenopus laevis (African clawed frog).